The chain runs to 235 residues: Ribitol-5-phosphate cytidylyltransferase (235 aa).

CTP-binding positions include 7-10 (LAGG), 82-88 (GADRNTS), and serine 113.

The protein belongs to the IspD/TarI cytidylyltransferase family. TarI subfamily.

It carries out the reaction D-ribitol 5-phosphate + CTP + H(+) = CDP-L-ribitol + diphosphate. The protein operates within cell wall biogenesis; poly(ribitol phosphate) teichoic acid biosynthesis. In terms of biological role, catalyzes the transfer of the cytidylyl group of CTP to D-ribitol 5-phosphate. This Streptococcus pneumoniae (strain CGSP14) protein is Ribitol-5-phosphate cytidylyltransferase.